Here is a 195-residue protein sequence, read N- to C-terminus: Probable thymidylate kinase (195 aa).

Residue 7 to 14 (GIDGVGKT) coordinates ATP.

It belongs to the thymidylate kinase family.

It carries out the reaction dTMP + ATP = dTDP + ADP. The polypeptide is Probable thymidylate kinase (Methanosphaera stadtmanae (strain ATCC 43021 / DSM 3091 / JCM 11832 / MCB-3)).